Here is a 99-residue protein sequence, read N- to C-terminus: NADH-ubiquinone oxidoreductase chain 2 (99 aa).

2 helical membrane passes run 22–42 and 65–85; these read FLTF…IQII and VMIS…SIFI.

The protein belongs to the complex I subunit 2 family.

The protein localises to the mitochondrion inner membrane. It carries out the reaction a ubiquinone + NADH + 5 H(+)(in) = a ubiquinol + NAD(+) + 4 H(+)(out). Its function is as follows. Core subunit of the mitochondrial membrane respiratory chain NADH dehydrogenase (Complex I) that is believed to belong to the minimal assembly required for catalysis. Complex I functions in the transfer of electrons from NADH to the respiratory chain. The immediate electron acceptor for the enzyme is believed to be ubiquinone. This chain is NADH-ubiquinone oxidoreductase chain 2 (ND2), found in Cyanidium caldarium (Red alga).